A 151-amino-acid polypeptide reads, in one-letter code: MQVILKEKVENLGVLGDIVNVKPGYARNFLIPFGKAVQATQANIKAFEAQKAELEKAEKARFEAAVAVADAIKDKVYTIAAQAGEGGKLFGSVGTAEVAEAVSNQSGKKVEKSQVRMPEGVIRSVGEFEFTVHVYTDVDADIKVNVVAAEA.

This sequence belongs to the bacterial ribosomal protein bL9 family.

Binds to the 23S rRNA. This chain is Large ribosomal subunit protein bL9, found in Francisella tularensis subsp. novicida (strain U112).